A 1772-amino-acid chain; its full sequence is Merozoite surface protein 1 (1772 aa).

An N-terminal signal peptide occupies residues 1-18; sequence MKVIGLLFSFVFFAIKCK. N-linked (GlcNAc...) asparagine glycosylation is present at asparagine 54. A disordered region spans residues 290–319; it reads TGGQSSTEPGSGGSSASGTSSSGQASAGTG. The segment covering 305–319 has biased composition (low complexity); the sequence is ASGTSSSGQASAGTG. Asparagine 406 and asparagine 646 each carry an N-linked (GlcNAc...) asparagine glycan. Positions 703–796 are disordered; that stretch reads KERMEQGPAI…QPSQAASSTT (94 aa). The segment covering 724-796 has biased composition (low complexity); sequence SAESSTDRST…QPSQAASSTT (73 aa). An N-linked (GlcNAc...) asparagine glycan is attached at asparagine 829. Positions 924–1070 are disordered; the sequence is AAPTPVTPAA…SRAESEEDMP (147 aa). Low complexity-rich tracts occupy residues 930 to 946 and 956 to 1052; these read TPAATEQQQQQATPDVQ and SQQP…NSQS. Residues asparagine 1018 and asparagine 1090 are each glycosylated (N-linked (GlcNAc...) asparagine). Positions 1362 to 1383 are disordered; that stretch reads GAVPGSGTDTRVAGSSVDDNED. 4 N-linked (GlcNAc...) asparagine glycosylation sites follow: asparagine 1408, asparagine 1446, asparagine 1541, and asparagine 1629. EGF-like domains are found at residues 1661–1703 and 1704–1752; these read HVCV…VENN and NPTC…FCSS. A disulfide bridge links cysteine 1663 with cysteine 1675. N-linked (GlcNAc...) asparagine glycosylation occurs at asparagine 1680. 4 disulfides stabilise this stretch: cysteine 1687/cysteine 1699, cysteine 1707/cysteine 1720, cysteine 1714/cysteine 1734, and cysteine 1736/cysteine 1750. Residue serine 1751 is the site of GPI-anchor amidated serine attachment. A propeptide spans 1752–1772 (removed in mature form); that stretch reads SSSFMGLSILLIITLIVFNIF.

In terms of assembly, forms a complex composed of subunits p83, p30, p38, and p42 which remain non-covalently associated; the complex is formed at the merozoite surface prior to egress from host erythrocytes. Post-translationally, the p230 precursor is cleaved by SUB1 prior to merozoite egress into 4 subunits p83, p30, p38, and p42 which remain non-covalently associated. In a second processing step during erythrocyte invasion, p42 is cleaved by SUB2 into p33 and p19; the latter remains attached to the merozoite surface via its GPI-anchor and stays on the surface during the subsequent ring stage.

The protein localises to the cell membrane. The protein resides in the secreted. Its function is as follows. During the asexual blood stage, involved in merozoite egress from host erythrocytes possibly via its interaction with the host cytoskeleton protein spectrin resulting in the destabilization of the host cytoskeleton and thus leading to erythrocyte cell membrane rupture. Involved in the binding to host erythrocytes and is required for host erythrocyte invasion. The polypeptide is Merozoite surface protein 1 (Plasmodium yoelii yoelii).